The following is a 122-amino-acid chain: Large ribosomal subunit protein uL14 (122 aa).

It belongs to the universal ribosomal protein uL14 family. Part of the 50S ribosomal subunit. Forms a cluster with proteins L3 and L19. In the 70S ribosome, L14 and L19 interact and together make contacts with the 16S rRNA in bridges B5 and B8.

Its function is as follows. Binds to 23S rRNA. Forms part of two intersubunit bridges in the 70S ribosome. The protein is Large ribosomal subunit protein uL14 of Desulfotalea psychrophila (strain LSv54 / DSM 12343).